Consider the following 20-residue polypeptide: Toxin b subunit beta (20 aa).

Toxin b is a heterodimer composed of toxin alpha and toxin beta. As to expression, expressed by the venom gland.

It is found in the secreted. Its function is as follows. Binds to sodium channels (Nav) and affects the channel activation process. This chain is Toxin b subunit beta, found in Androctonus crassicauda (Arabian fat-tailed scorpion).